The chain runs to 318 residues: MHVLFIIDPLPLLKAYKDSSVAMMQALQARGHTLSVALQGDLYIDAGEVRTRFAPIALRDGADLHGHDWWRETGAADEAPLARFDAVVMRKDPPFDMEYVYSTHLLEYAQQQGARVFNSGAAIRNHPEKLAITEFPDLTTPTLVTRDMARIRAFHAAQGDVIVKPLDDMGGTGIFRLQRSEPNLNAILETLTDNGTRTIMAQRYIPEIVKGDKRILLIGGEPMPYSLARIPLAGETRGNLAAGGRGVAQPLSERDLHLARTVADRLAGRGLLLVGLDVIGDYITEVNVTSPTCFVEITEQTGFNVPEMFAVALESAAG.

The ATP-grasp domain occupies 129 to 314 (KLAITEFPDL…VPEMFAVALE (186 aa)). 155 to 211 (HAAQGDVIVKPLDDMGGTGIFRLQRSEPNLNAILETLTDNGTRTIMAQRYIPEIVKG) lines the ATP pocket. Mg(2+) is bound by residues E285 and N287.

It belongs to the prokaryotic GSH synthase family. The cofactor is Mg(2+). Mn(2+) serves as cofactor.

It catalyses the reaction gamma-L-glutamyl-L-cysteine + glycine + ATP = glutathione + ADP + phosphate + H(+). The protein operates within sulfur metabolism; glutathione biosynthesis; glutathione from L-cysteine and L-glutamate: step 2/2. This is Glutathione synthetase from Bordetella pertussis (strain Tohama I / ATCC BAA-589 / NCTC 13251).